Here is a 467-residue protein sequence, read N- to C-terminus: Gustatory and odorant receptor 22 (467 aa).

Topologically, residues 1–106 are cytoplasmic; the sequence is MIHTQMEDAQ…MPRTTFTWCS (106 aa). The helical transmembrane segment at 107 to 127 threads the bilayer; sequence KAFLWAYFIYACETVIVLVVA. The Extracellular segment spans residues 128-144; sequence RERINKFISTSDKRFDE. Residues 145–165 traverse the membrane as a helical segment; that stretch reads VIYNIIFMSIMVPHFLLPVAS. The Cytoplasmic segment spans residues 166–198; that stretch reads WRNGSEVAKFKNMWTDFQYKYLIVTGKPIVFPK. The helical transmembrane segment at 199–219 threads the bilayer; it reads LYPITWTLCIVSWSLSLVIIL. Over 220-238 the chain is Extracellular; the sequence is SQYYLQPDFQFCHTFAYYH. Residues 239–259 form a helical membrane-spanning segment; sequence IIAMLNGFCSLWFVNCTAFGT. Over 260 to 304 the chain is Cytoplasmic; the sequence is ASKAFAKELTDVLATERPAAKLTEYRHLWVDLSHMMQQLGKAYSN. The chain crosses the membrane as a helical span at residues 305–325; sequence MYGIYCLVIFFTTIIATYGSL. The Extracellular segment spans residues 326–337; sequence SEIIEHGATYKE. Residues 338–358 traverse the membrane as a helical segment; the sequence is VGLFVIVFYCMSLLFIICNEA. Residues 359–414 are Cytoplasmic-facing; the sequence is HHASKRVGLNFQERLLNVNLTAVDKATQKEVEMFLVAIDKNPPTMNLDGYANINRG. A helical membrane pass occupies residues 415-435; it reads LITSNISFMATYLVVLMQFKL. The Extracellular portion of the chain corresponds to 436–467; the sequence is TLLRQSAKNAFISALKANLSRIRSLDADKVNT. N-linked (GlcNAc...) asparagine glycosylation is present at asparagine 453.

Belongs to the insect chemoreceptor superfamily. Gustatory receptor (GR) family. Gr21a subfamily. In terms of tissue distribution, carbon dioxide-responsive neurons coexpress GPRgr22 and GPRgr24 in the maxillary palp at both larval and adult life stages.

The protein resides in the cell membrane. In terms of biological role, gustatory receptor which mediates acceptance or avoidance behavior, depending on its substrates. GPRgr22 and GPRgr24 together are sufficient for olfactory carbon dioxide-chemosensation. This is Gustatory and odorant receptor 22 from Anopheles gambiae (African malaria mosquito).